Consider the following 175-residue polypeptide: MSKLKEYRVNRQIRAKECRLIDENGQQIGIVPIEEALKIAEEKGLDLVEIAPQAKPPVCKIMDYGKFKYELKKKEREARKKQREHQIEVKDIRMKVRIDEHDLQVKLKHMREFLEEGDKVKVWLRFRGRENIYPELGKKLAERIINELSDIAEVEVQPKKEGNFMIFVLAPKRKK.

The protein belongs to the IF-3 family. In terms of assembly, monomer.

The protein localises to the cytoplasm. Its function is as follows. IF-3 binds to the 30S ribosomal subunit and shifts the equilibrium between 70S ribosomes and their 50S and 30S subunits in favor of the free subunits, thus enhancing the availability of 30S subunits on which protein synthesis initiation begins. The protein is Translation initiation factor IF-3 of Aquifex aeolicus (strain VF5).